The chain runs to 363 residues: 3-isopropylmalate dehydrogenase (363 aa).

Residue 78–89 (GPKWGTGAVRPE) participates in NAD(+) binding. The substrate site is built by Arg-96, Arg-106, Arg-135, and Asp-224. 3 residues coordinate Mg(2+): Asp-224, Asp-249, and Asp-253. 288–299 (GSAPDLPANKVN) serves as a coordination point for NAD(+).

This sequence belongs to the isocitrate and isopropylmalate dehydrogenases family. In terms of assembly, homodimer. It depends on Mg(2+) as a cofactor. Mn(2+) serves as cofactor.

It is found in the cytoplasm. It carries out the reaction (2R,3S)-3-isopropylmalate + NAD(+) = 4-methyl-2-oxopentanoate + CO2 + NADH. Its pathway is amino-acid biosynthesis; L-leucine biosynthesis; L-leucine from 3-methyl-2-oxobutanoate: step 3/4. Catalyzes the oxidation of 3-carboxy-2-hydroxy-4-methylpentanoate (3-isopropylmalate) to 3-carboxy-4-methyl-2-oxopentanoate. The product decarboxylates to 4-methyl-2 oxopentanoate. The protein is 3-isopropylmalate dehydrogenase (LEU2) of Cyberlindnera jadinii (Torula yeast).